The chain runs to 120 residues: Histone H3-like centromeric protein cnp1 (120 aa).

The interval 1 to 26 is disordered; it reads MAKKSLMAEPGDPIPRPRKKRYRPGT. Residues 14-120 form an H3-like region; that stretch reads IPRPRKKRYR…MQLARRIRGA (107 aa).

The protein belongs to the histone H3 family. As to quaternary structure, component of centromeric nucleosomes, where DNA is wrapped around a histone octamer core. The octamer contains two molecules each of H2A, H2B, cnp1/CENPA and H4 assembled in one cnp1-H4 heterotetramer and two H2A-H2B heterodimers. Interacts with the inner kinetochore. Component of centromeric nucleosomes. Interacts with mis6. Interacts with sim4. In terms of processing, ubiquitinated. Is degraded through ubiquitin-mediated proteolysis when not protected by its association to the kinetochore.

It localises to the nucleus. It is found in the chromosome. The protein resides in the centromere. Its function is as follows. Histone H3-like nucleosomal protein that is specifically found in centromeric nucleosomes. Replaces conventional H3 in the nucleosome core of centromeric chromatin that serves as an assembly site for the inner kinetochore. Required for recruitment and assembly of kinetochore proteins, mitotic progression and chromosome segregation. May serve as an epigenetic mark that propagates centromere identity through replication and cell division. The chain is Histone H3-like centromeric protein cnp1 (cnp1) from Schizosaccharomyces pombe (strain 972 / ATCC 24843) (Fission yeast).